Here is a 151-residue protein sequence, read N- to C-terminus: Gametocyte-specific factor 1-like (151 aa).

2 consecutive CHHC U11-48K-type zinc fingers follow at residues 6–33 and 40–67; these read IEIC…RKKN and MASC…VNRS. Zn(2+) is bound by residues cysteine 9, histidine 15, histidine 25, cysteine 29, cysteine 43, histidine 49, histidine 59, and cysteine 63. Positions 130–151 are disordered; sequence QESRGGDQCPEDPQTRTRKANF.

It belongs to the UPF0224 (FAM112) family.

The polypeptide is Gametocyte-specific factor 1-like (Gtsf1l) (Mus musculus (Mouse)).